Reading from the N-terminus, the 1145-residue chain is MQKKRNRAGPPQQEAASDDGEMSDSSDKMEVAQGKGKSAVKRAPDADEVLRPVKLSKSDLYKPPTNDELNRLKETEHLFHTNLLRMQIEELLQEVKLKEKRRKTIDGFLREINTLLGTIPETPQTDLTDQTWLPDSIKVPILQVPYQVKGKFCFLPPSSIKVVGSYLLGTCIKPEINVDLAVTMPQEILQAKDNLNQRYSRKRALYLAHIASHLANNELFSSVKFTYMNSNHLKPVLLLRPYGKDEKLVTVRIHVCPPPGFFKISRLYPNKNNVRTAWYTEQETEGVNEPPTPHYNNTILSDLTLEHHLHHLSNCASDFPGMKDAVALLKVWLHQRQLDKGYGCFNGFLAAMLISYLLSKNKINKVMSGYQVLRNTLQFLATTDLTVNGITMATSTDSSLPSLHDFHEAFQVVFVDPLGVVNLCADMTTNKYHQIQFEARESLKVLDDTSADGFHLLLMVPKPFVRTFDHVFHLTNVSKLQGTCKKMKLLNQLIDQGGDYLATSLPYVLSILSKGLGPRVALLSHTLPHRPEWDIGEEPAKHRDSSLLSVGLLLEAELHTSVLEKGPAADSSQALDFRAFWGEKSELRRFQDGSICEAVVWPGSSLCEKRKVPELIVKYLLELHADIPESCISYTGNVLDCVLTRGKEAGTEEEKMVGIIQSYDDLSRKLWNLTDLPLTVTSVQGTHPCLRYSDVFPPLPVKPDWSSYQLLREKKCLVPNPEKPCPAYVAPVKVICHMEGSGKWPQDKDAIKRVKAAFQIRLAELLRAQHQLLCNPSATHTDVYKDGYVFRVQVAYHREPQYMKEIVTPEGMLKYQDTEESLQLELETLHLPSLTSTLHGLHQQHPAFGGTSRMAKRWIHSQLLGDSFSEECVDLLVAHLFLHPAPYSPPSSPQVGFLRFLHLLATFDWKNSPLIVNLNGELKGPDYTEIQNDFISARAQLPVMFIATPKDKKDSLWTKTQPTAQILQRLIVLCLESLRALEQQLMDPSGSQDYKMTFRPPLDLYDILIRLNPKQIPRHREAVDQPAKSFFRGLLKEGAQVKDLMFPVVGYDPVQCYLQELREAYGEFALFFHDKHGGDVIGVLWKPSGFEPQPFKTTNMTGRVMDGKSAKPLLVPNVEAIVEDFEILGEGLVASVEARTERWSI.

The tract at residues 1–46 (MQKKRNRAGPPQQEAASDDGEMSDSSDKMEVAQGKGKSAVKRAPDA) is disordered.

The protein belongs to the NRAP family. In terms of assembly, part of the small subunit (SSU) processome, composed of more than 70 proteins and the RNA chaperone small nucleolar RNA (snoRNA) U3.

Its subcellular location is the nucleus. It is found in the nucleolus. It localises to the chromosome. Part of the small subunit (SSU) processome, first precursor of the small eukaryotic ribosomal subunit. During the assembly of the SSU processome in the nucleolus, many ribosome biogenesis factors, an RNA chaperone and ribosomal proteins associate with the nascent pre-rRNA and work in concert to generate RNA folding, modifications, rearrangements and cleavage as well as targeted degradation of pre-ribosomal RNA by the RNA exosome. This is Nucleolar protein 6 (nol6) from Xenopus tropicalis (Western clawed frog).